The primary structure comprises 283 residues: NAD kinase (283 aa).

D73 serves as the catalytic Proton acceptor. NAD(+)-binding positions include 73-74, 146-147, H157, H176, D178, 189-194, and A213; these read DG, NE, and TAYNLS.

This sequence belongs to the NAD kinase family. It depends on a divalent metal cation as a cofactor.

The protein localises to the cytoplasm. It carries out the reaction NAD(+) + ATP = ADP + NADP(+) + H(+). Functionally, involved in the regulation of the intracellular balance of NAD and NADP, and is a key enzyme in the biosynthesis of NADP. Catalyzes specifically the phosphorylation on 2'-hydroxyl of the adenosine moiety of NAD to yield NADP. The polypeptide is NAD kinase (Haloarcula marismortui (strain ATCC 43049 / DSM 3752 / JCM 8966 / VKM B-1809) (Halobacterium marismortui)).